Consider the following 311-residue polypeptide: Protoheme IX farnesyltransferase (311 aa).

A run of 9 helical transmembrane segments spans residues 32–52 (VMSLVVFTALVGLVVSPVSIN), 53–73 (PWYGFLAILCIAIGGGGAGVL), 104–124 (FVFGMVLSMLSVLMMGKFINW), 125–145 (FAALLLAFTIFFYIVIYTIWL), 153–173 (IVIGGAAGAFPPMIGCAAATG), 180–200 (FLLFLIIFMWTPPHFWSLSLF), 224–244 (KQILFYTILMTISAAGPFIID), 245–265 (FAGIFYAIFSTILSVIFIYFA), and 290–310 (FYLAAIFGILLIEFLVWYFII).

This sequence belongs to the UbiA prenyltransferase family. Protoheme IX farnesyltransferase subfamily.

The protein localises to the cell inner membrane. The enzyme catalyses heme b + (2E,6E)-farnesyl diphosphate + H2O = Fe(II)-heme o + diphosphate. It functions in the pathway porphyrin-containing compound metabolism; heme O biosynthesis; heme O from protoheme: step 1/1. Its function is as follows. Converts heme B (protoheme IX) to heme O by substitution of the vinyl group on carbon 2 of heme B porphyrin ring with a hydroxyethyl farnesyl side group. The sequence is that of Protoheme IX farnesyltransferase from Bartonella quintana (strain Toulouse) (Rochalimaea quintana).